We begin with the raw amino-acid sequence, 99 residues long: Aspartyl/glutamyl-tRNA(Asn/Gln) amidotransferase subunit C (99 aa).

It belongs to the GatC family. In terms of assembly, heterotrimer of A, B and C subunits.

The enzyme catalyses L-glutamyl-tRNA(Gln) + L-glutamine + ATP + H2O = L-glutaminyl-tRNA(Gln) + L-glutamate + ADP + phosphate + H(+). The catalysed reaction is L-aspartyl-tRNA(Asn) + L-glutamine + ATP + H2O = L-asparaginyl-tRNA(Asn) + L-glutamate + ADP + phosphate + 2 H(+). Functionally, allows the formation of correctly charged Asn-tRNA(Asn) or Gln-tRNA(Gln) through the transamidation of misacylated Asp-tRNA(Asn) or Glu-tRNA(Gln) in organisms which lack either or both of asparaginyl-tRNA or glutaminyl-tRNA synthetases. The reaction takes place in the presence of glutamine and ATP through an activated phospho-Asp-tRNA(Asn) or phospho-Glu-tRNA(Gln). The polypeptide is Aspartyl/glutamyl-tRNA(Asn/Gln) amidotransferase subunit C (Macrococcus caseolyticus (strain JCSC5402) (Macrococcoides caseolyticum)).